A 476-amino-acid chain; its full sequence is Aspartyl/glutamyl-tRNA(Asn/Gln) amidotransferase subunit B (476 aa).

This sequence belongs to the GatB/GatE family. GatB subfamily. In terms of assembly, heterotrimer of A, B and C subunits.

The catalysed reaction is L-glutamyl-tRNA(Gln) + L-glutamine + ATP + H2O = L-glutaminyl-tRNA(Gln) + L-glutamate + ADP + phosphate + H(+). It carries out the reaction L-aspartyl-tRNA(Asn) + L-glutamine + ATP + H2O = L-asparaginyl-tRNA(Asn) + L-glutamate + ADP + phosphate + 2 H(+). Its function is as follows. Allows the formation of correctly charged Asn-tRNA(Asn) or Gln-tRNA(Gln) through the transamidation of misacylated Asp-tRNA(Asn) or Glu-tRNA(Gln) in organisms which lack either or both of asparaginyl-tRNA or glutaminyl-tRNA synthetases. The reaction takes place in the presence of glutamine and ATP through an activated phospho-Asp-tRNA(Asn) or phospho-Glu-tRNA(Gln). The chain is Aspartyl/glutamyl-tRNA(Asn/Gln) amidotransferase subunit B from Nitratidesulfovibrio vulgaris (strain ATCC 29579 / DSM 644 / CCUG 34227 / NCIMB 8303 / VKM B-1760 / Hildenborough) (Desulfovibrio vulgaris).